Reading from the N-terminus, the 222-residue chain is MKTTRAIAMLGLLLGLAACGTTPSTIVERPTTARPQAPAAVPATNGAIYQAATYRPLFEDRRARHVGDVLTIVINERTRAGKEASSSASKTSAVDASVGGVAKLPLKMFQGLGINAEASAEYEDESALDSSNTFSGNVTVTVIEVLPNGNLVVAGEKQIGLDKGTEYIRLSGVVQPDTIQAGNTVSSAKVADARIEYRSSAKFDKAEVMNWLGRFFLSFIPL.

Residues 1 to 18 (MKTTRAIAMLGLLLGLAA) form the signal peptide. The N-palmitoyl cysteine moiety is linked to residue cysteine 19. A lipid anchor (S-diacylglycerol cysteine) is attached at cysteine 19.

It belongs to the FlgH family. As to quaternary structure, the basal body constitutes a major portion of the flagellar organelle and consists of four rings (L,P,S, and M) mounted on a central rod.

The protein localises to the cell outer membrane. It is found in the bacterial flagellum basal body. Its function is as follows. Assembles around the rod to form the L-ring and probably protects the motor/basal body from shearing forces during rotation. The chain is Flagellar L-ring protein from Thiobacillus denitrificans (strain ATCC 25259 / T1).